Here is a 222-residue protein sequence, read N- to C-terminus: Ribonuclease HII (222 aa).

The RNase H type-2 domain occupies 32 to 222; the sequence is FHIAGVDEVG…LIKRYKEDIS (191 aa). A divalent metal cation is bound by residues D38, E39, and D130.

The protein belongs to the RNase HII family. It depends on Mn(2+) as a cofactor. Mg(2+) is required as a cofactor.

Its subcellular location is the cytoplasm. The enzyme catalyses Endonucleolytic cleavage to 5'-phosphomonoester.. In terms of biological role, endonuclease that specifically degrades the RNA of RNA-DNA hybrids. The sequence is that of Ribonuclease HII from Bartonella bacilliformis (strain ATCC 35685 / KC583 / Herrer 020/F12,63).